The chain runs to 381 residues: 1-deoxy-D-xylulose 5-phosphate reductoisomerase (381 aa).

NADPH is bound by residues T10, G11, S12, I13, G36, K37, N38, and N122. K123 provides a ligand contact to 1-deoxy-D-xylulose 5-phosphate. E124 provides a ligand contact to NADPH. Mn(2+) is bound at residue D148. 4 residues coordinate 1-deoxy-D-xylulose 5-phosphate: S149, E150, S173, and H196. Residue E150 participates in Mn(2+) binding. G202 lines the NADPH pocket. 1-deoxy-D-xylulose 5-phosphate-binding residues include S209, N214, K215, and E218. A Mn(2+)-binding site is contributed by E218.

Belongs to the DXR family. Mg(2+) serves as cofactor. Mn(2+) is required as a cofactor.

The catalysed reaction is 2-C-methyl-D-erythritol 4-phosphate + NADP(+) = 1-deoxy-D-xylulose 5-phosphate + NADPH + H(+). It participates in isoprenoid biosynthesis; isopentenyl diphosphate biosynthesis via DXP pathway; isopentenyl diphosphate from 1-deoxy-D-xylulose 5-phosphate: step 1/6. Its function is as follows. Catalyzes the NADPH-dependent rearrangement and reduction of 1-deoxy-D-xylulose-5-phosphate (DXP) to 2-C-methyl-D-erythritol 4-phosphate (MEP). The polypeptide is 1-deoxy-D-xylulose 5-phosphate reductoisomerase (Desulfitobacterium hafniense (strain Y51)).